The following is a 122-amino-acid chain: Large ribosomal subunit protein uL14 (122 aa).

It belongs to the universal ribosomal protein uL14 family. Part of the 50S ribosomal subunit. Forms a cluster with proteins L3 and L19. In the 70S ribosome, L14 and L19 interact and together make contacts with the 16S rRNA in bridges B5 and B8.

In terms of biological role, binds to 23S rRNA. Forms part of two intersubunit bridges in the 70S ribosome. The polypeptide is Large ribosomal subunit protein uL14 (Chromobacterium violaceum (strain ATCC 12472 / DSM 30191 / JCM 1249 / CCUG 213 / NBRC 12614 / NCIMB 9131 / NCTC 9757 / MK)).